The chain runs to 302 residues: Glycine--tRNA ligase alpha subunit (302 aa).

The protein belongs to the class-II aminoacyl-tRNA synthetase family. As to quaternary structure, tetramer of two alpha and two beta subunits.

The protein localises to the cytoplasm. It catalyses the reaction tRNA(Gly) + glycine + ATP = glycyl-tRNA(Gly) + AMP + diphosphate. The polypeptide is Glycine--tRNA ligase alpha subunit (Haemophilus ducreyi (strain 35000HP / ATCC 700724)).